A 663-amino-acid polypeptide reads, in one-letter code: Heparan-alpha-glucosaminide N-acetyltransferase (663 aa).

The tract at residues 1–24 (MTGARASAAEQRRAGRSGQARAAE) is disordered. Over 1–190 (MTGARASAAE…LAVNEDPVDS (190 aa)) the chain is Lumenal, vesicle. Asn94, Asn142, and Asn162 each carry an N-linked (GlcNAc...) asparagine glycan. The cysteines at positions 151 and 462 are disulfide-linked. The helical transmembrane segment at 191-211 (NLPVSIAFLIGLAVIIVISFL) threads the bilayer. Residues 212 to 275 (RLLLSLDDFN…PRLRSVDTFR (64 aa)) lie on the Cytoplasmic side of the membrane. Phosphoserine is present on residues Ser243 and Ser245. Residues 276 to 296 (GIALILMVFVNYGGGKYWYFK) traverse the membrane as a helical segment. The active site involves His297. Topologically, residues 297 to 302 (HASWNG) are lumenal, vesicle. Residues 303–323 (LTVADLVFPWFVFIMGSSIFL) form a helical membrane-spanning segment. Over 324-345 (SMTSILQRGCSKFRLLGKIAWR) the chain is Cytoplasmic. The helical transmembrane segment at 346 to 366 (SFLLICIGIIIVNPNYCLGPL) threads the bilayer. Residues 367–374 (SWDKVRIP) lie on the Lumenal, vesicle side of the membrane. A helical transmembrane segment spans residues 375–395 (GVLQRLGVTYFVVAVLELLFA). Over 396 to 420 (KPVPEHCASERSCLSLRDITSSWPQ) the chain is Cytoplasmic. Residues 421–441 (WLLILVLEGLWLGLTFLLPVP) form a helical membrane-spanning segment. The Lumenal, vesicle portion of the chain corresponds to 442–500 (GCPTGYLGPGGIGDFGKYPNCTGGAAGYIDRLLLGDDHLYQHPSSAVLYHTEVAYDPEG). The chain crosses the membrane as a helical span at residues 501-521 (ILGTINSIVMAFLGVQAGKIL). Residues 522–529 (LYYKARTK) are Cytoplasmic-facing. Residues 530–550 (DILIRFTAWCCILGLISVALT) form a helical membrane-spanning segment. Residues 551-564 (KVSENEGFIPVNKN) lie on the Lumenal, vesicle side of the membrane. Residues 565-585 (LWSLSYVTTLSSFAFFILLVL) form a helical membrane-spanning segment. Topologically, residues 586 to 592 (YPVVDVK) are cytoplasmic. A helical transmembrane segment spans residues 593 to 613 (GLWTGTPFFYPGMNSILVYVG). Over 614–634 (HEVFENYFPFQWKLKDNQSHK) the chain is Lumenal, vesicle. The interval 624–635 (QWKLKDNQSHKE) is lysosomal targeting region. The helical transmembrane segment at 635 to 655 (EHLTQNIVATALWVLIAYILY) threads the bilayer. The Cytoplasmic segment spans residues 656-663 (RKKIFWKI).

In terms of assembly, homooligomer. Homooligomerization is necessary for enzyme activity. Undergoes intralysosomal proteolytic cleavage; occurs within the end of the first and/or the beginning of the second luminal domain and is essential for the activation of the enzyme. Post-translationally, glycosylated. Widely expressed, with highest level in leukocytes, heart, liver, skeletal muscle, lung, placenta and liver.

The protein resides in the lysosome membrane. It catalyses the reaction alpha-D-glucosaminyl-[heparan sulfate](n) + acetyl-CoA = N-acetyl-alpha-D-glucosaminyl-[heparan sulfate](n) + CoA + H(+). Its function is as follows. Lysosomal acetyltransferase that acetylates the non-reducing terminal alpha-glucosamine residue of intralysosomal heparin or heparan sulfate, converting it into a substrate for luminal alpha-N-acetyl glucosaminidase. The chain is Heparan-alpha-glucosaminide N-acetyltransferase (HGSNAT) from Homo sapiens (Human).